The sequence spans 243 residues: 3-deoxy-manno-octulosonate cytidylyltransferase (243 aa).

The protein belongs to the KdsB family.

The protein resides in the cytoplasm. The enzyme catalyses 3-deoxy-alpha-D-manno-oct-2-ulosonate + CTP = CMP-3-deoxy-beta-D-manno-octulosonate + diphosphate. It functions in the pathway nucleotide-sugar biosynthesis; CMP-3-deoxy-D-manno-octulosonate biosynthesis; CMP-3-deoxy-D-manno-octulosonate from 3-deoxy-D-manno-octulosonate and CTP: step 1/1. The protein operates within bacterial outer membrane biogenesis; lipopolysaccharide biosynthesis. Functionally, activates KDO (a required 8-carbon sugar) for incorporation into bacterial lipopolysaccharide in Gram-negative bacteria. This Helicobacter acinonychis (strain Sheeba) protein is 3-deoxy-manno-octulosonate cytidylyltransferase.